The primary structure comprises 525 residues: Histidine-rich glycoprotein (525 aa).

A signal peptide spans 1–18 (MKVLTTALLLVTLQCSHA). The Cystatin 1 domain occupies 19-122 (LSPTNCDASK…ESQDLSVNGY (104 aa)). 5 cysteine pairs are disulfide-bonded: Cys24/Cys504, Cys78/Cys89, Cys103/Cys124, Cys201/Cys414, and Cys216/Cys239. Positions 41–84 (GRRSGYTFQLLRVSDAHLDRVETATIYYLVLDVVESDCWVLSTK) are interaction with ATP5F1A. 2 N-linked (GlcNAc...) asparagine glycosylation sites follow: Asn112 and Asn123. Residues 135-240 (NTKDSPVLVD…TPEYTDLICE (106 aa)) enclose the Cystatin 2 domain. Ser145 bears the Phosphoserine mark. Asn200 carries N-linked (GlcNAc...) asparagine glycosylation. Residues 275–445 (RDHHHTHKTH…GHSRKRGPGK (171 aa)) are disordered. N-linked (GlcNAc...) asparagine glycans are attached at residues Asn322 and Asn330. Basic residues-rich tracts occupy residues 339–392 (HGQH…HGHH) and 426–443 (QYHR…KRGP). Position 438 is a phosphoserine (Ser438).

Interacts with THBS1 (via the TSP type I repeats); the interaction blocks the antiangiogenic effect of THBS1 with CD36. Interacts with HPSE; the interaction is enhanced at acidic pH, partially inhibits binding of HPSE to cell surface receptors and modulates its enzymatic activity. Interacts (via the HRR domain) with TMP1; the interaction partially mediates the antiangiogenic properties of HRG. Interacts with kappa and lambda light chains of IgG molecules. Interacts with ATP5F1A; the interaction occurs on the surface of T-cells and alters their cell morphology in concert with CONA. Binds IgG molecules containing kappa and lambda light chains and inhibits the formation of insoluble immunoglobulin complexes. Interacts with F12; the interaction, which is enhanced in the presence of zinc ions and inhibited by heparin-binding to HRG, inhibits factor XII autoactivation and contact-initiated coagulation. Interacts with PLG (via its Kringle domains); the interaction tethers PLG to the cell surface and enhances its activation. Interacts (via the HRR domain) with TPM1; the interaction appears to contribute to the antiangiogenic properties of the HRR domain. Interacts with THBS2; the interaction blocks the antiangiogenic effect of THBS2 with CD36. N-glycosylated. In terms of processing, proteolytic cleavage produces several HRG fragments which are mostly disulfide-linked and, therefore, not released. Cleavage by plasmin is inhibited in the presence of heparin, zinc ions or in an acidic environment. Cleavage reduces binding of HRG to heparan sulfate, but enhances the ability of HRG to bind and tether plasminogen to the cell surface. On platelet activation, releases a 33 kDa antiangiogenic peptide which encompasses the HRR. Also cleaved in the C-terminal by plasmin. As to expression, expressed in liver, blood plasma, serum and in platelets. Also present in fibrin clots, wound fluid from acute wounds and chronic leg ulcers.

It localises to the secreted. Plasma glycoprotein that binds a number of ligands such as heme, heparin, heparan sulfate, thrombospondin, plasminogen, and divalent metal ions. Inhibits rosette formation. Acts as an adapter protein and implicated in regulating many processes such as immune complex and pathogen clearance, cell adhesion, angiogenesis, coagulation and fibrinolysis. Mediates clearance of necrotic cells through enhancing the phagocytosis of necrotic cells in a heparan sulfate-dependent pathway. This process can be regulated by the presence of certain HRG ligands such as heparin and zinc ions. Binds to IgG subclasses of immunoglobins containing kappa and lambda light chains with different affinities regulating their clearance and inhibiting the formation of insoluble immune complexes. Tethers plasminogen to the cell surface. Binds T-cells and alters the cell morphology. Modulates angiogenesis by blocking the CD6-mediated antiangiongenic effect of thrombospondins, THBS1 and THBS2. This is Histidine-rich glycoprotein (Hrg) from Rattus norvegicus (Rat).